The following is a 582-amino-acid chain: Proline--tRNA ligase (582 aa).

It belongs to the class-II aminoacyl-tRNA synthetase family. ProS type 1 subfamily. As to quaternary structure, homodimer.

Its subcellular location is the cytoplasm. The enzyme catalyses tRNA(Pro) + L-proline + ATP = L-prolyl-tRNA(Pro) + AMP + diphosphate. Functionally, catalyzes the attachment of proline to tRNA(Pro) in a two-step reaction: proline is first activated by ATP to form Pro-AMP and then transferred to the acceptor end of tRNA(Pro). As ProRS can inadvertently accommodate and process non-cognate amino acids such as alanine and cysteine, to avoid such errors it has two additional distinct editing activities against alanine. One activity is designated as 'pretransfer' editing and involves the tRNA(Pro)-independent hydrolysis of activated Ala-AMP. The other activity is designated 'posttransfer' editing and involves deacylation of mischarged Ala-tRNA(Pro). The misacylated Cys-tRNA(Pro) is not edited by ProRS. The sequence is that of Proline--tRNA ligase from Mycobacterium bovis (strain ATCC BAA-935 / AF2122/97).